The chain runs to 319 residues: ATP-dependent 6-phosphofructokinase (319 aa).

ATP is bound at residue glycine 11. 21–25 (RAAVR) is an ADP binding site. Residues 72 to 73 (RS) and 102 to 105 (GDGS) each bind ATP. Aspartate 103 is a binding site for Mg(2+). 125 to 127 (TID) contacts substrate. Aspartate 127 serves as the catalytic Proton acceptor. Arginine 154 lines the ADP pocket. Substrate is bound by residues arginine 162 and 169 to 171 (MGR). ADP is bound by residues 185–187 (GAE), arginine 211, and 213–215 (KKH). Substrate-binding positions include glutamate 222, arginine 243, and 249-252 (HIQR).

The protein belongs to the phosphofructokinase type A (PFKA) family. ATP-dependent PFK group I subfamily. Prokaryotic clade 'B1' sub-subfamily. As to quaternary structure, homotetramer. It depends on Mg(2+) as a cofactor.

It localises to the cytoplasm. It carries out the reaction beta-D-fructose 6-phosphate + ATP = beta-D-fructose 1,6-bisphosphate + ADP + H(+). It participates in carbohydrate degradation; glycolysis; D-glyceraldehyde 3-phosphate and glycerone phosphate from D-glucose: step 3/4. Its activity is regulated as follows. Allosterically activated by ADP and other diphosphonucleosides, and allosterically inhibited by phosphoenolpyruvate. Functionally, catalyzes the phosphorylation of D-fructose 6-phosphate to fructose 1,6-bisphosphate by ATP, the first committing step of glycolysis. The sequence is that of ATP-dependent 6-phosphofructokinase from Brevibacillus brevis (strain 47 / JCM 6285 / NBRC 100599).